Consider the following 384-residue polypeptide: Alkanesulfonate monooxygenase (384 aa).

Belongs to the SsuD family.

The enzyme catalyses an alkanesulfonate + FMNH2 + O2 = an aldehyde + FMN + sulfite + H2O + 2 H(+). Functionally, catalyzes the desulfonation of aliphatic sulfonates. In Burkholderia thailandensis (strain ATCC 700388 / DSM 13276 / CCUG 48851 / CIP 106301 / E264), this protein is Alkanesulfonate monooxygenase.